The sequence spans 116 residues: Flagellar transcriptional regulator FlhD (116 aa).

This sequence belongs to the FlhD family. Homodimer; disulfide-linked. Forms a heterohexamer composed of two FlhC and four FlhD subunits. Each FlhC binds a FlhD dimer, forming a heterotrimer, and a hexamer assembles by dimerization of two heterotrimers.

It localises to the cytoplasm. Its function is as follows. Functions in complex with FlhC as a master transcriptional regulator that regulates transcription of several flagellar and non-flagellar operons by binding to their promoter region. Activates expression of class 2 flagellar genes, including fliA, which is a flagellum-specific sigma factor that turns on the class 3 genes. Also regulates genes whose products function in a variety of physiological pathways. The protein is Flagellar transcriptional regulator FlhD of Serratia proteamaculans (strain 568).